We begin with the raw amino-acid sequence, 190 residues long: Probable molybdenum cofactor guanylyltransferase (190 aa).

GTP contacts are provided by residues 9–11 (LCG), K21, D65, and D94. D94 serves as a coordination point for Mg(2+).

The protein belongs to the MobA family. Mg(2+) is required as a cofactor.

Its subcellular location is the cytoplasm. The enzyme catalyses Mo-molybdopterin + GTP + H(+) = Mo-molybdopterin guanine dinucleotide + diphosphate. Its function is as follows. Transfers a GMP moiety from GTP to Mo-molybdopterin (Mo-MPT) cofactor (Moco or molybdenum cofactor) to form Mo-molybdopterin guanine dinucleotide (Mo-MGD) cofactor. The polypeptide is Probable molybdenum cofactor guanylyltransferase (Flavobacterium johnsoniae (strain ATCC 17061 / DSM 2064 / JCM 8514 / BCRC 14874 / CCUG 350202 / NBRC 14942 / NCIMB 11054 / UW101) (Cytophaga johnsonae)).